We begin with the raw amino-acid sequence, 242 residues long: ADP-dependent L-serine kinase SerK (242 aa).

Glutamate 30 is a catalytic residue. ADP is bound by residues serine 43, isoleucine 49, tryptophan 51, and lysine 52. Valine 68 contributes to the O-phospho-L-serine binding site. Residues aspartate 69, glycine 70, histidine 71, histidine 72, and arginine 73 each contribute to the ADP site. A Mg(2+)-binding site is contributed by aspartate 69. O-phospho-L-serine contacts are provided by glycine 70, histidine 71, and histidine 72. Residues tryptophan 102, lysine 221, threonine 223, and histidine 225 each coordinate O-phospho-L-serine.

The protein belongs to the SerK family. The cofactor is Mg(2+).

It catalyses the reaction L-serine + ADP = O-phospho-L-serine + AMP + H(+). It functions in the pathway amino-acid biosynthesis; L-cysteine biosynthesis; L-cysteine from L-serine: step 1/2. Free serine kinase that uses ADP to phosphorylate L-serine to yield O-phospho-L-serine and AMP. This Thermococcus kodakarensis (strain ATCC BAA-918 / JCM 12380 / KOD1) (Pyrococcus kodakaraensis (strain KOD1)) protein is ADP-dependent L-serine kinase SerK.